The primary structure comprises 306 residues: Probable pinoresinol-lariciresinol reductase 3 (306 aa).

NADP(+) is bound by residues glycine 14–glycine 20, arginine 39, and lysine 46. The active-site Proton acceptor is lysine 131. Arginine 135 serves as a coordination point for NADP(+).

It belongs to the NmrA-type oxidoreductase family. Isoflavone reductase subfamily. Dimer.

Its function is as follows. Probable reductase that might be involved in the reduction of lariciresinol into secoisolariciresinol. In most plant species, a single enzyme is able to reduce both pinoresinol and lariciresinol efficiently while in Arabidopsis, PRR1 and PRR2 show a strict substrate selectivity for pinoresinol. The protein is Probable pinoresinol-lariciresinol reductase 3 (PLR3) of Arabidopsis thaliana (Mouse-ear cress).